Here is a 518-residue protein sequence, read N- to C-terminus: Cytochrome P450 monooxygenase ARMGADRAFT_1018417 (518 aa).

The chain crosses the membrane as a helical span at residues 3 to 23 (LFSAYALAFSLLMIPLILYIL). Residue cysteine 433 participates in heme binding. An N-linked (GlcNAc...) asparagine glycan is attached at asparagine 455.

The protein belongs to the cytochrome P450 family. Heme is required as a cofactor.

It is found in the membrane. It participates in secondary metabolite biosynthesis. Functionally, cytochrome P450 monooxygenase, part of the gene cluster that mediates the biosynthesis of melleolides, a range of antifungal and phytotoxic polyketide derivatives composed of an orsellinic acid (OA) moiety esterified to various sesquiterpene alcohols. The first step in melleolides biosynthesis is performed by the delta(6)-protoilludene synthase PRO1 which catalyzes the cyclization of farnesyl diphosphate to protoilludene. The orsellinic acid synthase armB produces OA by condensing acetyl-CoA with 3 malonyl-CoA units in a three-round chain elongation reaction folowed by a C2-C7 ring closure. ArmB further catalyzes the trans-esterification of OA to the various sesquiterpene alcohols resulting from the hydroxylation of protoilludene. The melleolides cluster also includes 5 cytochrome P450 monooxygenases, 4 NAD(+)-dependent oxidoreductases, one flavin-dependent oxidoreductase, and one O-methyltransferase. The cytochrome P450 monooxygenases may be involved in protoilludene hydroxylation to elaborate melleolides with multiple alcohol groups, such as melleolide D, which carries alcohol functionalities at C-4, C-5, C-10, and C-13. The role of the NAD(+)-dependent enzymes remains unknown. Numerous melleolides, including arnamial, show 5'-O-methylation of the aromatic moiety which may be catalyzed by the methyltransferase encoded in the cluster. The flavin-dependent oxidoreductase might represent the dehydrogenase yielding the aldehyde in position 1 of arnamial and other melleolides. Finally, several halogenase localized outside of the cluster, are able to catalyze the transfer of a single chlorine atom to the melleolide backbone, resulting in a 6'-chloromelleolide product. In Armillaria gallica (Bulbous honey fungus), this protein is Cytochrome P450 monooxygenase ARMGADRAFT_1018417.